The primary structure comprises 527 residues: MKYIFVTGGVMSGLGKGITAASIGRLLKNRGYQVTAVKIDPYLNIDAGTMNPAQHGEVFVLHDGGEVDLDLGNYERFLDIELNSSHNITTGKVYRMVIDKERRGDYLGQTVQIIPHITDQIKDCIRSAAEEKVFDGKPADICIVEVGGTVGDIESMPFLEAVRQMRSELATADRALVHVTLMPSDSMGDLKTKPTQHSIKALRELGIFTDIIVGRSERPLNSHTKKKLSSLCDIPQNGIISAATAPDIYQVPMELEKEGMADVLCQLLQLRKDGADPEWYRIVTREYTHRITIGIVSKYGKEDVYLSIKEALRHAGRKLSTEVSIRWLDAERVEPADLRECDGVLIPGGFGVRGIEGKINAIRLCREERIPLLGLCLGFQLSVVEFARNVLGIADACSSECGDGTAVITILPEQEGVENLGGTMRLGDCPVEIKSGTIAYKLYRQHEIIERHRHRYEVDPAYISRLEDAGLIFSGRNGNRMEIAEIEDHPFFFATQFHPEFRSRPTSPSPPFLGFVEACLKNRGKGE.

The amidoligase domain stretch occupies residues 1 to 270 (MKYIFVTGGV…ADVLCQLLQL (270 aa)). S12 is a CTP binding site. Residue S12 coordinates UTP. ATP is bound by residues 13–18 (GLGKGI) and D70. D70 and E145 together coordinate Mg(2+). CTP contacts are provided by residues 152-154 (DIE), 191-196 (KTKPTQ), and K227. UTP contacts are provided by residues 191–196 (KTKPTQ) and K227. Residues 292–525 (TIGIVSKYGK…VEACLKNRGK (234 aa)) form the Glutamine amidotransferase type-1 domain. L-glutamine is bound at residue G349. Catalysis depends on C376, which acts as the Nucleophile; for glutamine hydrolysis. Residues 377–380 (LGFQ), E400, and R455 contribute to the L-glutamine site. Catalysis depends on residues H498 and E500.

It belongs to the CTP synthase family. Homotetramer.

The catalysed reaction is UTP + L-glutamine + ATP + H2O = CTP + L-glutamate + ADP + phosphate + 2 H(+). The enzyme catalyses L-glutamine + H2O = L-glutamate + NH4(+). It catalyses the reaction UTP + NH4(+) + ATP = CTP + ADP + phosphate + 2 H(+). Its pathway is pyrimidine metabolism; CTP biosynthesis via de novo pathway; CTP from UDP: step 2/2. With respect to regulation, allosterically activated by GTP, when glutamine is the substrate; GTP has no effect on the reaction when ammonia is the substrate. The allosteric effector GTP functions by stabilizing the protein conformation that binds the tetrahedral intermediate(s) formed during glutamine hydrolysis. Inhibited by the product CTP, via allosteric rather than competitive inhibition. Its function is as follows. Catalyzes the ATP-dependent amination of UTP to CTP with either L-glutamine or ammonia as the source of nitrogen. Regulates intracellular CTP levels through interactions with the four ribonucleotide triphosphates. This is CTP synthase from Methanospirillum hungatei JF-1 (strain ATCC 27890 / DSM 864 / NBRC 100397 / JF-1).